The primary structure comprises 208 residues: Uracil phosphoribosyltransferase (208 aa).

Residues Arg78, Arg103, and 130–138 each bind 5-phospho-alpha-D-ribose 1-diphosphate; that span reads DPMLATGGS. Residues Ile193 and 198 to 200 each bind uracil; that span reads GDA. Asp199 serves as a coordination point for 5-phospho-alpha-D-ribose 1-diphosphate.

This sequence belongs to the UPRTase family. The cofactor is Mg(2+).

The enzyme catalyses UMP + diphosphate = 5-phospho-alpha-D-ribose 1-diphosphate + uracil. The protein operates within pyrimidine metabolism; UMP biosynthesis via salvage pathway; UMP from uracil: step 1/1. Allosterically activated by GTP. Its function is as follows. Catalyzes the conversion of uracil and 5-phospho-alpha-D-ribose 1-diphosphate (PRPP) to UMP and diphosphate. The protein is Uracil phosphoribosyltransferase of Shewanella amazonensis (strain ATCC BAA-1098 / SB2B).